The following is a 324-amino-acid chain: Lipoyl synthase, chloroplastic (324 aa).

2 stretches are compositionally biased toward low complexity: residues 1-12 and 20-29; these read MCGPTATTVANA and KGLPPGLKKP. A disordered region spans residues 1 to 30; sequence MCGPTATTVANAGTGGETIKGLPPGLKKPP. Residues cysteine 58, cysteine 63, cysteine 69, cysteine 86, cysteine 90, cysteine 93, and serine 302 each coordinate [4Fe-4S] cluster. Positions 72–291 constitute a Radical SAM core domain; sequence GDTGTATVML…AYGEEVIGFR (220 aa).

Belongs to the radical SAM superfamily. Lipoyl synthase family. It depends on [4Fe-4S] cluster as a cofactor.

The protein resides in the plastid. It localises to the chloroplast. The catalysed reaction is [[Fe-S] cluster scaffold protein carrying a second [4Fe-4S](2+) cluster] + N(6)-octanoyl-L-lysyl-[protein] + 2 oxidized [2Fe-2S]-[ferredoxin] + 2 S-adenosyl-L-methionine + 4 H(+) = [[Fe-S] cluster scaffold protein] + N(6)-[(R)-dihydrolipoyl]-L-lysyl-[protein] + 4 Fe(3+) + 2 hydrogen sulfide + 2 5'-deoxyadenosine + 2 L-methionine + 2 reduced [2Fe-2S]-[ferredoxin]. The protein operates within protein modification; protein lipoylation via endogenous pathway; protein N(6)-(lipoyl)lysine from octanoyl-[acyl-carrier-protein]: step 2/2. Catalyzes the radical-mediated insertion of two sulfur atoms into the C-6 and C-8 positions of the octanoyl moiety bound to the lipoyl domains of lipoate-dependent enzymes, thereby converting the octanoylated domains into lipoylated derivatives. The chain is Lipoyl synthase, chloroplastic from Ostreococcus lucimarinus (strain CCE9901).